Reading from the N-terminus, the 445-residue chain is Histidinol dehydrogenase (445 aa).

Residues Tyr130, Gln192, and Asn215 each coordinate NAD(+). Positions 238, 260, and 263 each coordinate substrate. Zn(2+) contacts are provided by Gln260 and His263. Residues Glu328 and His329 each act as proton acceptor in the active site. Substrate is bound by residues His329, Asp362, Glu416, and His421. Zn(2+) is bound at residue Asp362. A Zn(2+)-binding site is contributed by His421.

The protein belongs to the histidinol dehydrogenase family. Zn(2+) is required as a cofactor.

The catalysed reaction is L-histidinol + 2 NAD(+) + H2O = L-histidine + 2 NADH + 3 H(+). The protein operates within amino-acid biosynthesis; L-histidine biosynthesis; L-histidine from 5-phospho-alpha-D-ribose 1-diphosphate: step 9/9. Catalyzes the sequential NAD-dependent oxidations of L-histidinol to L-histidinaldehyde and then to L-histidine. The chain is Histidinol dehydrogenase from Gloeobacter violaceus (strain ATCC 29082 / PCC 7421).